We begin with the raw amino-acid sequence, 730 residues long: Trimethylamine dehydrogenase (730 aa).

Pro29, Cys31, Tyr61, and Glu104 together coordinate FMN. Cys31 is modified (S-6-FMN cysteine). Residue 170-173 (YGAH) coordinates substrate. Tyr175 serves as the catalytic Proton donor. Positions 223, 268, 300, 322, and 323 each coordinate FMN. [4Fe-4S] cluster-binding residues include Cys346, Cys349, Cys352, and Cys365. Ser401, Asp420, Thr421, His428, Met471, and Asp675 together coordinate ADP.

This sequence in the N-terminal section; belongs to the NADH:flavin oxidoreductase/NADH oxidase family. As to quaternary structure, homodimer. Forms a ternary complex with the heterodimeric electron transfer flavoprotein. It depends on FMN as a cofactor. Requires [4Fe-4S] cluster as cofactor.

The catalysed reaction is trimethylamine + oxidized [electron-transfer flavoprotein] + H2O + H(+) = dimethylamine + reduced [electron-transfer flavoprotein] + formaldehyde. The protein is Trimethylamine dehydrogenase of Methylophilus methylotrophus (Bacterium W3A1).